The sequence spans 65 residues: Large ribosomal subunit protein bL35 (65 aa).

Residues 1 to 10 (MPKMKSKSSA) are compositionally biased toward basic residues. The disordered stretch occupies residues 1–21 (MPKMKSKSSAKMRFSVRAGGT).

This sequence belongs to the bacterial ribosomal protein bL35 family.

The chain is Large ribosomal subunit protein bL35 from Polynucleobacter necessarius subsp. necessarius (strain STIR1).